Here is a 324-residue protein sequence, read N- to C-terminus: Probable 6-phosphogluconolactonase 4, chloroplastic (324 aa).

Residues 1 to 61 (MSVSAAVAAA…RAPAMATDCA (61 aa)) constitute a chloroplast transit peptide. The disordered stretch occupies residues 20–43 (RRRSPPASRVAATSRGRPFSSGPH). A compositionally biased stretch (low complexity) spans 24–34 (PPASRVAATSR).

Belongs to the glucosamine/galactosamine-6-phosphate isomerase family. 6-phosphogluconolactonase subfamily.

Its subcellular location is the plastid. It localises to the chloroplast. It catalyses the reaction 6-phospho-D-glucono-1,5-lactone + H2O = 6-phospho-D-gluconate + H(+). Its pathway is carbohydrate degradation; pentose phosphate pathway; D-ribulose 5-phosphate from D-glucose 6-phosphate (oxidative stage): step 2/3. Functionally, hydrolysis of 6-phosphogluconolactone to 6-phosphogluconate. The chain is Probable 6-phosphogluconolactonase 4, chloroplastic from Oryza sativa subsp. indica (Rice).